Here is a 161-residue protein sequence, read N- to C-terminus: Small ribosomal subunit protein uS19 (161 aa).

Residues 1–19 (MARQKKYSGKGGARKKNKQ) show a composition bias toward basic residues. The tract at residues 1–26 (MARQKKYSGKGGARKKNKQKQSVAPR) is disordered.

Belongs to the universal ribosomal protein uS19 family.

Its function is as follows. Protein S19 forms a complex with S13 that binds strongly to the 16S ribosomal RNA. This chain is Small ribosomal subunit protein uS19, found in Methanococcus maripaludis (strain C6 / ATCC BAA-1332).